A 155-amino-acid polypeptide reads, in one-letter code: 17.4 kDa class III heat shock protein (155 aa).

In terms of domain architecture, sHSP spans 35–155 (GRGSSNNIPI…KPKTVQIAVS (121 aa)).

The protein belongs to the small heat shock protein (HSP20) family. In terms of assembly, may form oligomeric structures.

It localises to the cytoplasm. This chain is 17.4 kDa class III heat shock protein (HSP17.4B), found in Arabidopsis thaliana (Mouse-ear cress).